Consider the following 303-residue polypeptide: Secreted mono- and diacylglycerol lipase LIP4 (303 aa).

The N-terminal stretch at 1 to 16 (MHFLAFLLCLIPLALC) is a signal peptide. C54 and C293 are oxidised to a cystine. Catalysis depends on S167, which acts as the Nucleophile. The active site involves D224.

The protein belongs to the AB hydrolase superfamily. Lipase family. Class 3 subfamily.

The protein resides in the secreted. The enzyme catalyses a monoacylglycerol + H2O = glycerol + a fatty acid + H(+). The catalysed reaction is a diacylglycerol + H2O = a monoacylglycerol + a fatty acid + H(+). Secreted lipase involved in Dandruff and seborrheic dermatitis (D/SD) probably via lipase-mediated breakdown of sebaceous lipids and release of irritating free fatty acids. Shows activity against monoglyceride and diglyceride substrates. Due to an absence of fatty acid synthase genes in Malassezia species, secretory lipases are essential for the yeast to generate free fatty acids from degradation of sebum and assimilate them as lipid sources for growth. Plays an essential role at the pathogen-host interface during disease progression. This chain is Secreted mono- and diacylglycerol lipase LIP4, found in Malassezia restricta (strain ATCC 96810 / NBRC 103918 / CBS 7877) (Seborrheic dermatitis infection agent).